We begin with the raw amino-acid sequence, 1174 residues long: K(+) efflux antiporter 2, chloroplastic (1174 aa).

Residues 1–57 constitute a chloroplast transit peptide; the sequence is MDFASSVQRQSMFHGGADFASYCLPNRMISAKLCPKGLGGTRFWDPMIDSKVRSAIR. Residues 58 to 565 lie on the Stromal side of the membrane; it reads SKRNVSYRSS…MFPQQEVNEE (508 aa). Residues 119–141 form a disordered region; that stretch reads GSDDREVTFSKEEKDTREQDSAP. A coiled-coil region spans residues 142–350; that stretch reads SLEELRDLLN…ALQRAEKTLF (209 aa). Lysine 170 carries the post-translational modification N6-acetyllysine; by NSI. Positions 420 to 448 are enriched in basic and acidic residues; sequence EAEGEAEKSKNVVLTKKQEVQKDLPRESS. The disordered stretch occupies residues 420–457; it reads EAEGEAEKSKNVVLTKKQEVQKDLPRESSSHNGTKTSL. A helical transmembrane segment spans residues 566–586; it reads EASLLDVLWLLLASVIFVPLF. The Chloroplast intermembrane portion of the chain corresponds to 587–592; that stretch reads QKIPGG. Residues 593-613 form a helical membrane-spanning segment; the sequence is SPVLGYLAAGILIGPYGLSII. At 614–620 the chain is on the stromal side; the sequence is RNVHGTK. The chain crosses the membrane as a helical span at residues 621–641; that stretch reads AIAEFGVVFLLFNIGLELSVE. At 642–648 the chain is on the chloroplast intermembrane side; the sequence is RLSSMKK. The chain crosses the membrane as a helical span at residues 649-669; sequence YVFGLGSAQVLVTAAVIGLIT. Residues 670-678 lie on the Stromal side of the membrane; the sequence is HYVAGQAGP. Residues 679 to 699 form a helical membrane-spanning segment; that stretch reads AAIVIGNGLALSSTAVVLQVL. Topologically, residues 700–713 are chloroplast intermembrane; that stretch reads QERGESTSRHGRAT. Residues 714–734 traverse the membrane as a helical segment; that stretch reads FSVLLFQDLAVVVLLILIPLI. Topologically, residues 735–746 are stromal; the sequence is SPNSSKGGIGFQ. A helical membrane pass occupies residues 747–767; it reads AIAEALGLAAIKAAVAITGII. Topologically, residues 768–807 are chloroplast intermembrane; that stretch reads AGGRLLLRPIYKQIAENRNAEIFSANTLLVILGTSLLTAR. A helical transmembrane segment spans residues 808 to 828; the sequence is AGLSMALGAFLAGLLLAETEF. Topologically, residues 829–841 are stromal; the sequence is SLQVESDIAPYRG. The helical transmembrane segment at 842-862 threads the bilayer; that stretch reads LLLGLFFMTVGMSIDPKLLLA. Topologically, residues 863 to 865 are chloroplast intermembrane; the sequence is NFP. The chain crosses the membrane as a helical span at residues 866 to 886; the sequence is LIMGTLGLLLVGKTILVVIIG. Residues 887 to 898 lie on the Stromal side of the membrane; that stretch reads KLFGISIISAVR. The chain crosses the membrane as a helical span at residues 899–919; that stretch reads VGLLLAPGGEFAFVAFGEAVN. Residues 920–928 are Chloroplast intermembrane-facing; it reads QGIMTPQLS. The helical transmembrane segment at 929–949 threads the bilayer; sequence SLLFLVVGISMALTPWLAAGG. Over 950–1174 the chain is Stromal; that stretch reads QLIASRFELQ…NQIIEGTLAI (225 aa). In terms of domain architecture, RCK N-terminal spans 975–1092; it reads QGHIIICGFG…EKAGATAVVP (118 aa). The disordered stretch occupies residues 1141–1174; the sequence is SLGYGFSRSTSKPKPPSPSETSDDNQIIEGTLAI.

The protein belongs to the monovalent cation:proton antiporter 2 (CPA2) transporter (TC 2.A.37) family. KEA (TC 2.A.37.1) subfamily. Acetylated at Lys-170 by the stromal acetyltransferase enzyme NSI. Detected in leaves, stems and flowers. Expressed in shoots and roots. Mainly localized to leaf veins, hypocotyls, mesophylls and guard cells. Accumulates at high levels in small and dividing plastids (at protein level).

It localises to the plastid. The protein localises to the chloroplast inner membrane. Its subcellular location is the plastid inner membrane. It catalyses the reaction K(+)(in) + H(+)(out) = K(+)(out) + H(+)(in). Its activity is regulated as follows. Repressed by sodium ions Na(+). Functionally, electroneutral K(+)/H(+) efflux antiporter modulating monovalent cation and pH homeostasis in plastids, especially during plastid division and thylakoid membrane formation. Transports K(+) and Cs(+) preferentially relative to Na(+) or Li(+). May function in osmotic adjustment. Collaboratively with KEA1, adjusts alkaline stromal pH upon light to dark transitions in plastids. Together with KEA1, critical for chloroplast development, including chloroplast RNA-metabolism (e.g. rRNA maturation, polysome loading and RNA-protein interactions) and plastid gene expression (PGE), ion homeostasis, and photosynthesis. Contributes, during early seedling development, to the regulation of photosynthesis and abscisic acid- (ABA-) mediated primary root growth in a sucrose-dependent manner. Involved in the regulation of reactive oxygen and nitrogen species (ROS and RNS) metabolism. Required in roots for rapid hyperosmotic-induced Ca(2+) responses and for osmo-sensory potentiation in hyperosmotic conditions. May counteract resilience to drought and salt stress, involving photorespiratory pathway and stomata closure. The protein is K(+) efflux antiporter 2, chloroplastic of Arabidopsis thaliana (Mouse-ear cress).